The primary structure comprises 312 residues: tRNA-dihydrouridine(16) synthase (312 aa).

FMN-binding positions include 7–9 and Q68; that span reads PME. C98 (proton donor) is an active-site residue. FMN is bound by residues K139, 200–202, and 224–225; these read NGE and GR.

Belongs to the Dus family. DusC subfamily. Requires FMN as cofactor.

It carries out the reaction 5,6-dihydrouridine(16) in tRNA + NADP(+) = uridine(16) in tRNA + NADPH + H(+). The catalysed reaction is 5,6-dihydrouridine(16) in tRNA + NAD(+) = uridine(16) in tRNA + NADH + H(+). In terms of biological role, catalyzes the synthesis of 5,6-dihydrouridine (D), a modified base found in the D-loop of most tRNAs, via the reduction of the C5-C6 double bond in target uridines. Specifically modifies U16 in tRNAs. The sequence is that of tRNA-dihydrouridine(16) synthase from Yersinia pestis.